The primary structure comprises 616 residues: Spastin (616 aa).

Residues 1–44 (MNSPGGRGKKKGSGGPSSPVPPRPPPPCLASSRPAPRPAPPPQS) form a disordered region. The interval 1–50 (MNSPGGRGKKKGSGGPSSPVPPRPPPPCLASSRPAPRPAPPPQSPHKRNL) is required for nuclear localization. The Cytoplasmic portion of the chain corresponds to 1 to 56 (MNSPGGRGKKKGSGGPSSPVPPRPPPPCLASSRPAPRPAPPPQSPHKRNLYYFSYP). The required for interaction with ATL1 stretch occupies residues 1–80 (MNSPGGRGKK…LGLLFVWLCQ (80 aa)). The segment at 1 to 194 (MNSPGGRGKK…LVMAKDRLQL (194 aa)) is required for midbody localization. Residues 1 to 300 (MNSPGGRGKK…STPKTNRTNK (300 aa)) are required for interaction with RTN1. A Nuclear localization signal motif is present at residues 4–11 (PGGRGKKK). Composition is skewed to pro residues over residues 18–28 (SPVPPRPPPPC) and 35–44 (APRPAPPPQS). The segment at 50–87 (LYYFSYPLFLGFALLRLVAFHLGLLFVWLCQRFSRALM) is required for interaction with SSNA1 and microtubules. Positions 57–77 (LFLGFALLRLVAFHLGLLFVW) form an intramembrane region, helical. Residues 59–67 (LGFALLRLV) carry the Nuclear export signal motif. Topologically, residues 78 to 616 (LCQRFSRALM…WNKDFGDTTV (539 aa)) are cytoplasmic. The sufficient for interaction with CHMP1B stretch occupies residues 112–196 (EVERVRAFHK…MAKDRLQLLE (85 aa)). Residues 114–200 (ERVRAFHKQA…RLQLLEKLQP (87 aa)) are required for interaction with microtubules. The MIT domain maps to 120–195 (HKQAFEYISV…VMAKDRLQLL (76 aa)). The tract at residues 223–266 (GHLQSESGAVPKRKDPLTHPSNSLPRSKAIMKTGSTGLSGHHRA) is disordered. The interval 226 to 328 (QSESGAVPKR…NVDSNLANFI (103 aa)) is sufficient for interaction with microtubules. A sufficient for microtubule severing region spans residues 228-616 (ESGAVPKRKD…WNKDFGDTTV (389 aa)). 2 positions are modified to phosphoserine: Ser245 and Ser268. The required for interaction with microtubules and microtubule severing stretch occupies residues 270 to 328 (SGLSIVSGMRQGPGPTTATHKSTPKTNRTNKPSTPTTAPRKKKDLKNFRNVDSNLANFI). Positions 278–311 (MRQGPGPTTATHKSTPKTNRTNKPSTPTTAPRKK) are disordered. Residues 283–306 (GPTTATHKSTPKTNRTNKPSTPTT) show a composition bias toward polar residues. Position 306 is a phosphothreonine (Thr306). The Nuclear localization signal motif lies at 309 to 312 (RKKK). The segment at 310–312 (KKK) is required for interaction with microtubules. 382–389 (GPPGNGKT) is an ATP binding site. Phosphoserine is present on Ser597.

It belongs to the AAA ATPase family. Spastin subfamily. Homohexamer. Mostly monomeric, but assembles into hexameric structure for short periods of time. Oligomerization seems to be a prerequisite for catalytic activity. Binding to ATP in a cleft between two adjacent subunits stabilizes the homohexameric form. Binds to microtubules at least in part via the alpha-tubulin and beta-tubulin tails. The hexamer adopts a ring conformation through which microtubules pass prior to being severed. Does not interact strongly with tubulin heterodimers. Interacts (via MIT domain) with CHMP1B; the interaction is direct. Interacts with SSNA1. Interacts with ATL1. Interacts with RTN1. Interacts with ZFYVE27. Interacts with REEP1. Interacts (via MIT domain) with IST1.

It is found in the membrane. The protein localises to the endoplasmic reticulum. Its subcellular location is the midbody. It localises to the cytoplasm. The protein resides in the cytoskeleton. It is found in the microtubule organizing center. The protein localises to the centrosome. Its subcellular location is the perinuclear region. It localises to the nucleus. The protein resides in the spindle. It is found in the cell projection. The protein localises to the axon. It catalyses the reaction n ATP + n H2O + a microtubule = n ADP + n phosphate + (n+1) alpha/beta tubulin heterodimers.. Its activity is regulated as follows. Allosteric enzyme with a cooperative mechanism; at least two neighbor subunits influence each other strongly in spastin hexamers. Microtubule binding promotes cooperative interactions among spastin subunits. Functionally, ATP-dependent microtubule severing protein that specifically recognizes and cuts microtubules that are polyglutamylated. Preferentially recognizes and acts on microtubules decorated with short polyglutamate tails: severing activity increases as the number of glutamates per tubulin rises from one to eight, but decreases beyond this glutamylation threshold. Severing activity is not dependent on tubulin acetylation or detyrosination. Microtubule severing promotes reorganization of cellular microtubule arrays and the release of microtubules from the centrosome following nucleation. It is critical for the biogenesis and maintenance of complex microtubule arrays in axons, spindles and cilia. SPAST is involved in abscission step of cytokinesis and nuclear envelope reassembly during anaphase in cooperation with the ESCRT-III complex. Recruited at the midbody, probably by IST1, and participates in membrane fission during abscission together with the ESCRT-III complex. Recruited to the nuclear membrane by IST1 and mediates microtubule severing, promoting nuclear envelope sealing and mitotic spindle disassembly during late anaphase. Required for membrane traffic from the endoplasmic reticulum (ER) to the Golgi and endosome recycling. Recruited by IST1 to endosomes and regulates early endosomal tubulation and recycling by mediating microtubule severing. Probably plays a role in axon growth and the formation of axonal branches. The sequence is that of Spastin from Sus scrofa (Pig).